Consider the following 620-residue polypeptide: Somatic embryogenesis receptor kinase 4 (620 aa).

The signal sequence occupies residues 1 to 33 (MTSSKMEQRSLLCFLYLLLLFNFTLRVAGNAEG). At 34-234 (DALTQLKNSL…GGQMTAAIAG (201 aa)) the chain is on the extracellular side. LRR repeat units follow at residues 100 to 122 (NLQYLELYSNNITGEIPEELGDL), 124 to 146 (ELVSLDLYANSISGPIPSSLGKL), 148 to 170 (KLRFLRLNNNSLSGEIPMTLTSV), 171 to 193 (QLQVLDISNNRLSGDIPVNGSFS), and 194 to 215 (LFTPISFANNSLTDLPEPPPTS). Asn110 carries an N-linked (GlcNAc...) asparagine glycan. 3 N-linked (GlcNAc...) asparagine glycosylation sites follow: Asn156, Asn189, and Asn202. Residues 205–227 (LTDLPEPPPTSTSPTPPPPSGGQ) form a disordered region. Positions 209 to 224 (PEPPPTSTSPTPPPPS) are enriched in pro residues. Residues 235–255 (GVAAGAALLFAVPAIAFAWWL) traverse the membrane as a helical segment. Residues 256–620 (RRKPQDHFFD…IENDYPSGPR (365 aa)) are Cytoplasmic-facing. Residue Thr291 is modified to Phosphothreonine. The Protein kinase domain maps to 294-591 (FSNKNVLGRG…KEEMPIHDFN (298 aa)). Ser295 carries the phosphoserine modification. ATP is bound by residues 300–308 (LGRGGFGKV) and Lys322. Phosphoserine is present on residues Ser375 and Ser378. Asp421 functions as the Proton acceptor in the catalytic mechanism. A phosphothreonine mark is found at Thr454, Thr455, and Thr460. At Tyr468 the chain carries Phosphotyrosine. Ser470 carries the post-translational modification Phosphoserine. Thr471 carries the phosphothreonine modification. Ser475 carries the post-translational modification Phosphoserine. Thr551 carries the phosphothreonine modification.

The protein belongs to the protein kinase superfamily. Ser/Thr protein kinase family. Interacts with the EF-Tu receptor EFR and FLS2 in a specific ligand-induced manner. Interacts with TMK4/BARK1. Interacts with ERECTA in a EPF2-induced manner. Interacts with ERL1 in a EPF1-induced manner. Interacts with TMM. Forms a complex with MIK2 in response to SCOOP12 perception. In terms of processing, autophosphorylated on Thr and Tyr residues.

Its subcellular location is the cell membrane. The catalysed reaction is L-seryl-[protein] + ATP = O-phospho-L-seryl-[protein] + ADP + H(+). The enzyme catalyses L-threonyl-[protein] + ATP = O-phospho-L-threonyl-[protein] + ADP + H(+). It catalyses the reaction L-tyrosyl-[protein] + ATP = O-phospho-L-tyrosyl-[protein] + ADP + H(+). Dual specificity kinase acting on both serine/threonine- and tyrosine-containing substrates. Positively regulates the BR-dependent plant growth pathway and negatively regulates the BR-independent cell-death pathway. Required during SCOOP small peptides (e.g. SCOOP10 and SCOOP12) perception and signaling; associates with MIK2 as a coreceptor upon MIK2 perception of SCOOP peptides, and relays the signaling through the activation of receptor-like cytosolic kinases (RLCKs) BIK1 and PBL1. This chain is Somatic embryogenesis receptor kinase 4, found in Arabidopsis thaliana (Mouse-ear cress).